The primary structure comprises 576 residues: Keratin, type II cytoskeletal 5 (576 aa).

Residues 1 to 163 are head; that stretch reads MSRQSSVSFR…DPTIQRVRTE (163 aa). 4 positions are modified to phosphoserine: Ser5, Ser8, Ser16, and Ser21. Thr24 is subject to Phosphothreonine; by CDK1. Residues Ser26, Ser36, Ser46, Ser60, Ser67, Ser71, Ser74, and Ser78 each carry the phosphoserine modification. Thr147 carries the post-translational modification Phosphothreonine; by CDK1. At Thr162 the chain carries Phosphothreonine; by AURKB. Residues 164–199 are coil 1A; that stretch reads EREQIKTLNNKFASFIDKVRFLEQQNKVLDTKWTLL. Positions 164 to 477 constitute an IF rod domain; that stretch reads EREQIKTLNN…KLLEGEECRL (314 aa). A linker 1 region spans residues 200-218; the sequence is QEQGTKTIKQNLDPLFEQY. A coil 1B region spans residues 219 to 311; that stretch reads INNLRRQLDG…FFDAELSQMQ (93 aa). The tract at residues 312–334 is linker 12; the sequence is THVSDTSVVLSMDNNRSLDLDSI. The coil 2 stretch occupies residues 335-473; sequence IAEVKAQYED…ATYRKLLEGE (139 aa). The segment at 474–576 is tail; that stretch reads ECRLSGEGVG…TSSSRRSFKS (103 aa). An Omega-N-methylarginine modification is found at Arg527. The span at 540–557 shows a compositional bias: gly residues; the sequence is GFSASSGQGGGFSSGGGS. The tract at residues 540-576 is disordered; sequence GFSASSGQGGGFSSGGGSSSSVKFVSTTSSSRRSFKS. Residues 558 to 576 are compositionally biased toward low complexity; the sequence is SSSVKFVSTTSSSRRSFKS.

Belongs to the intermediate filament family. Heterodimer of a type I and a type II keratin. Heterodimer with type I keratin KRT25 leading to the formation of keratin intermediate filament (KIF) network. Forms a heterodimer (via 2B domains) with KRT14 (via 2B domains). Interacts with TCHP. Interacts with EPPK1. Interacts with AMELX. Interacts with PKP1 (via N-terminus) and PKP2. Post-translationally, phosphorylated by CDK1, AURKB and Rho-kinase, phosphorylation is regulated by the cell cycle. Thr-24 phosphorylation, mediated by CDK1, peaks during prometaphase or metaphase cells with phosphorylated filamentous structures evident throughout the cytoplasm during early mitosis. CDK1 phosphorylates Thr-24 in mitotic cells at the site of injury. O-glycosylated. Expressed in the epidermis (at protein level) and testis (within pachytene spermatocytes).

The protein localises to the cytoplasm. In terms of biological role, required for the formation of keratin intermediate filaments in the basal epidermis and maintenance of the skin barrier in response to mechanical stress. Regulates the recruitment of Langerhans cells to the epidermis, potentially by modulation of the abundance of macrophage chemotactic cytokines, macrophage inflammatory cytokines and CTNND1 localization in keratinocytes. The chain is Keratin, type II cytoskeletal 5 from Rattus norvegicus (Rat).